The primary structure comprises 395 residues: Non-homologous end joining protein Ku (395 aa).

Residues 9-181 (ISFGLVSIPI…PPEDAAPDGD (173 aa)) form the Ku domain. The tract at residues 252–395 (RAARTSRDDE…SASSRKRTSA (144 aa)) is disordered. Polar residues-rich tracts occupy residues 283-292 (SSKTSGQSSG) and 311-320 (GKTVTRSGDS). Residues 351-361 (TARKTTAKKTT) are compositionally biased toward basic residues. Residues 362 to 371 (AKGTTGTTAA) are compositionally biased toward low complexity.

It belongs to the prokaryotic Ku family. Homodimer. Interacts with LigD.

In terms of biological role, with LigD forms a non-homologous end joining (NHEJ) DNA repair enzyme, which repairs dsDNA breaks with reduced fidelity. Binds linear dsDNA with 5'- and 3'- overhangs but not closed circular dsDNA nor ssDNA. Recruits and stimulates the ligase activity of LigD. This chain is Non-homologous end joining protein Ku, found in Streptomyces griseus subsp. griseus (strain JCM 4626 / CBS 651.72 / NBRC 13350 / KCC S-0626 / ISP 5235).